A 479-amino-acid chain; its full sequence is MTTTNQEPILKATHFRSEGDVNTTPAREKWNESLNDDATQAMLKRDSDVFLHQAMSTPCLDTLTAAEGIYIQDATGKKYMDFHGNNVHQLGYGHPHIINKVTQQMASLPFSPRRFTNETAVQCAEKLTQICGGDLNRVLFAPGGTSVIGMALKLARHVTNNFKVVSLWDSFHGASLDAISVGGEACFREGMGPLMAGVERIPPAVSYRGAFPLRDSLSLRGQNSGDANETACDVHYADYLEYVIEKEGGIGAFIAEAVRNTDVQVPSKAYWKRIREICDKHNVMLIIDDIPNGMGRSGEWFTHQAFDIEPDILCIGKGFGGGLVPIAAMITKDKYNTAAQVSLGHYTHEKSPIGCAAALATMEVIEQENLLEKVQADSAFVREQLLQMKEEYPVIGDIRGIGLLWGVELVTDHITKTRAFDEAEAVLYQCLNEGLSFKVSQGNVIQLSPPLIISRNELEVALSVFEKAIAKVCKDFEYL.

K317 bears the N6-(pyridoxal phosphate)lysine mark.

The protein belongs to the class-III pyridoxal-phosphate-dependent aminotransferase family. It depends on pyridoxal 5'-phosphate as a cofactor.

It carries out the reaction (1R)-(2-amino-1-hydroxyethyl)phosphonate = phosphonoacetaldehyde + NH4(+). In terms of biological role, involved in phosphonate degradation. Functions as a lyase that catalyzes an elimination reaction on the naturally occurring compound (R)-1-hydroxy-2-aminoethylphosphonate ((R)-HAEP), releasing ammonia and generating phosphonoacetaldehyde (PAA), which can be then hydrolyzed by PhnX, encoded by an adjacent gene. Thus, catalyzes a reaction that serves to funnel (R)-HAEP into the hydrolytic pathway for aminoethylphosphonate (AEP, the most common biogenic phosphonate) degradation, expanding the scope and the usefulness of the pathway itself. Is not active toward the (S) enantiomer of HAEP or other HAEP-related compounds such as ethanolamine and D,L-isoserine, indicating a very high substrate specificity. In Vibrio splendidus (strain 12B01), this protein is (R)-1-hydroxy-2-aminoethylphosphonate ammonia-lyase.